Here is a 139-residue protein sequence, read N- to C-terminus: Crossover junction endodeoxyribonuclease Hje (139 aa).

3 residues coordinate Mg(2+): Glu-10, Asp-39, and Glu-52.

It belongs to the Holliday junction resolvase Hjc family. Hje subfamily. Homodimer. It depends on Mg(2+) as a cofactor.

It catalyses the reaction Endonucleolytic cleavage at a junction such as a reciprocal single-stranded crossover between two homologous DNA duplexes (Holliday junction).. In terms of biological role, a structure-specific endonuclease that resolves Holliday junction (HJ) intermediates during genetic recombination. Acts only on 4-way DNA junctions in a sequence non-specific manner; introduces paired nicks in opposing strands 2 bases 3' of the point of strand exchange only on continuous strands of 4-way junction DNA. Cleaves both mobile and immobile junctions. Its function is as follows. Redundant function with Holliday junction resolvase Hjc. The polypeptide is Crossover junction endodeoxyribonuclease Hje (Sulfolobus acidocaldarius (strain ATCC 33909 / DSM 639 / JCM 8929 / NBRC 15157 / NCIMB 11770)).